The sequence spans 875 residues: uncharacterized protein (875 aa).

The tract at residues 83 to 149 (PFQPPPPQPF…QPPQPPPQQL (67 aa)) is disordered. The segment covering 101 to 147 (QQPPQPPPDQPQQPQPPQQPPQQPPQQQPQPPQPPQQPPQPPQPPPQ) has biased composition (pro residues).

This is an uncharacterized protein from Orgyia pseudotsugata multicapsid polyhedrosis virus (OpMNPV).